The sequence spans 374 residues: WD repeat-containing protein JIP5 (374 aa).

7 WD repeats span residues 21-61 (AYTS…GETS), 68-107 (PSKRTARALSIEENGDEIWMGGKSGSLLCALTPPKVIQLS), 120-158 (AHECPINRVYCVNRNLVATGDDDGVIKLWDPRQADSIRT), 161-200 (QHFDYISDFTYFDDKRQLVATSGDGHLSVIDIRSNKSTPL), 205-244 (DQEDELLSIVPIKGGQKAIVGSGLGILSVWNRQMGWADSV), 249-287 (GHPASIDAIVALTPDIIATGSEDGMIRVIQVLPHKFLGV), and 290-330 (THEE…EDSD). Residues 325-344 (LFEDSDEDDEMEEDEPDSDE) show a composition bias toward acidic residues. Residues 325–374 (LFEDSDEDDEMEEDEPDSDEEKSKKKKKDNGMKDMSRGQAENDGSFFADL) form a disordered region.

Belongs to the WD repeat WDR55 family.

It is found in the nucleus. The protein resides in the nucleolus. The sequence is that of WD repeat-containing protein JIP5 (JIP5) from Cryptococcus neoformans var. neoformans serotype D (strain B-3501A) (Filobasidiella neoformans).